A 312-amino-acid polypeptide reads, in one-letter code: Undecaprenyl-diphosphatase (312 aa).

The next 7 membrane-spanning stretches (helical) occupy residues 74-94 (GVAF…WYFW), 122-142 (VSIG…KVFI), 154-174 (VAIA…ERIG), 183-203 (LDIR…IPGV), 226-246 (FSFL…LKTL), 254-274 (VGLV…YIAI), and 288-308 (IFIW…ISGV).

The protein belongs to the UppP family.

Its subcellular location is the cell inner membrane. The enzyme catalyses di-trans,octa-cis-undecaprenyl diphosphate + H2O = di-trans,octa-cis-undecaprenyl phosphate + phosphate + H(+). In terms of biological role, catalyzes the dephosphorylation of undecaprenyl diphosphate (UPP). Confers resistance to bacitracin. In Trichodesmium erythraeum (strain IMS101), this protein is Undecaprenyl-diphosphatase.